The following is a 351-amino-acid chain: MRNAIKTVGIVFGGVSGEHEVSIKSARTIIHALKHPININKFDVISIYIDKKGKWWPSEIAEKVLESDPNFDKNIFFKQVEFIGLDHLPKETEKIQIWFPVLHGPNGEDGSIQGFFQLTGKPYVGSGVLGSALGMDKIAMKAAFSAAGLPQVNYCEIHSIDLLDKKRLSYLIQKIETQLGYPCFIKPANLGSSVGISKAYDKKELLNGLDLAAQLDSRIVVEKNIKARELECAVIGKKQIKTSCVGEVRYSSDWYDYDSKYSKNSTKTLIPAPIPEKISKEVQSLSILACKAISAEGIARVDFFYDEEKDSLWINEINTMPGFTEQSMYPMLWDASGIDISQLVARLIESA.

Residues 141-349 (KAAFSAAGLP…ISQLVARLIE (209 aa)) form the ATP-grasp domain. 176–231 (ETQLGYPCFIKPANLGSSVGISKAYDKKELLNGLDLAAQLDSRIVVEKNIKARELE) is a binding site for ATP. The Mg(2+) site is built by D302, E316, and N318.

It belongs to the D-alanine--D-alanine ligase family. It depends on Mg(2+) as a cofactor. Mn(2+) serves as cofactor.

The protein resides in the cytoplasm. The enzyme catalyses 2 D-alanine + ATP = D-alanyl-D-alanine + ADP + phosphate + H(+). It functions in the pathway cell wall biogenesis; peptidoglycan biosynthesis. Functionally, cell wall formation. The sequence is that of D-alanine--D-alanine ligase from Prochlorococcus marinus (strain SARG / CCMP1375 / SS120).